The following is a 302-amino-acid chain: uncharacterized protein (302 aa).

A run of 9 helical transmembrane segments spans residues 1 to 21 (MSWI…LGVI), 33 to 53 (SLLF…YIYY), 67 to 87 (FLIE…IFQF), 101 to 121 (FGII…IILI), 124 to 144 (FSWL…KTFY), 185 to 205 (YVTP…VFAI), 220 to 240 (IIYT…FCLA), 253 to 273 (LALI…IAIP), and 274 to 294 (AYIS…ASVI).

This sequence belongs to the TerC family.

It localises to the cell membrane. This is an uncharacterized protein from Rickettsia bellii (strain RML369-C).